The chain runs to 192 residues: Large ribosomal subunit protein uL6 (192 aa).

The protein belongs to the universal ribosomal protein uL6 family. In terms of assembly, component of the large ribosomal subunit.

Its subcellular location is the cytoplasm. Functionally, component of the large ribosomal subunit. The ribosome is a large ribonucleoprotein complex responsible for the synthesis of proteins in the cell. This Ictalurus punctatus (Channel catfish) protein is Large ribosomal subunit protein uL6 (rpl9).